Here is a 220-residue protein sequence, read N- to C-terminus: Probable GTP-binding protein EngB (220 aa).

The EngB-type G domain occupies aspartate 41 to leucine 219. GTP contacts are provided by residues glycine 49–serine 56, glycine 76–glutamate 80, aspartate 96–glycine 99, threonine 164–aspartate 167, and methionine 197–alanine 200. Serine 56 and threonine 78 together coordinate Mg(2+).

The protein belongs to the TRAFAC class TrmE-Era-EngA-EngB-Septin-like GTPase superfamily. EngB GTPase family. Requires Mg(2+) as cofactor.

Necessary for normal cell division and for the maintenance of normal septation. The polypeptide is Probable GTP-binding protein EngB (Hyphomonas neptunium (strain ATCC 15444)).